The chain runs to 123 residues: Large ribosomal subunit protein bL19 (123 aa).

Belongs to the bacterial ribosomal protein bL19 family.

In terms of biological role, this protein is located at the 30S-50S ribosomal subunit interface and may play a role in the structure and function of the aminoacyl-tRNA binding site. The chain is Large ribosomal subunit protein bL19 from Ureaplasma parvum serovar 3 (strain ATCC 27815 / 27 / NCTC 11736).